Consider the following 459-residue polypeptide: Mitochondrial distribution and morphology protein 10 (459 aa).

It belongs to the MDM10 family. As to quaternary structure, component of the ER-mitochondria encounter structure (ERMES) or MDM complex, composed of mmm1, mdm10, mdm12 and mdm34. Associates with the mitochondrial outer membrane sorting assembly machinery SAM(core) complex.

It is found in the mitochondrion outer membrane. Functionally, component of the ERMES/MDM complex, which serves as a molecular tether to connect the endoplasmic reticulum and mitochondria. Components of this complex are involved in the control of mitochondrial shape and protein biogenesis and may function in phospholipid exchange. mdm10 is involved in the late assembly steps of the general translocase of the mitochondrial outer membrane (TOM complex). Functions in the tom40-specific route of the assembly of outer membrane beta-barrel proteins, including the association of tom40 with the receptor tom22 and small TOM proteins. Can associate with the SAM(core) complex as well as the mdm12-mmm1 complex, both involved in late steps of the major beta-barrel assembly pathway, that is responsible for biogenesis of all outer membrane beta-barrel proteins. May act as a switch that shuttles between both complexes and channels precursor proteins into the tom40-specific pathway. Plays a role in mitochondrial morphology and in the inheritance of mitochondria. The chain is Mitochondrial distribution and morphology protein 10 (mdmB) from Aspergillus terreus (strain NIH 2624 / FGSC A1156).